A 166-amino-acid chain; its full sequence is uncharacterized protein (166 aa).

3 Pentapeptide repeat domains span residues 38–77 (GECLDCNLAGADLREFNLENARLNRSDLSGANLSGVNLRR), 78–117 (ALLDRANLTGANLSETDLTEAALTEANLAGADLSGANLER), and 118–157 (SFLRDVDLTGANLKGANLAWANLTAANLTDVDLEEAEFWE).

This is an uncharacterized protein from Synechocystis sp. (strain ATCC 27184 / PCC 6803 / Kazusa).